The sequence spans 423 residues: Protein MANNAN SYNTHESIS-RELATED 2 (423 aa).

Over M1–R6 the chain is Cytoplasmic. Residues Q7–H26 form a helical; Signal-anchor for type II membrane protein membrane-spanning segment. The Lumenal portion of the chain corresponds to R27–C423. D264–R266 serves as a coordination point for substrate.

It belongs to the glycosyltransferase GT106 family. As to expression, widely expressed.

Its subcellular location is the golgi apparatus membrane. It participates in glycan biosynthesis. Its function is as follows. Glycosyltransferase involved in mannan biosynthesis. The protein is Protein MANNAN SYNTHESIS-RELATED 2 of Arabidopsis thaliana (Mouse-ear cress).